A 365-amino-acid polypeptide reads, in one-letter code: Transmembrane protein 25 (365 aa).

Positions 1-26 (MELPLSQATLRHTLLLLPALLSSGQG) are cleaved as a signal peptide. Residues 27-232 (ELAPQIDGQT…APGLLATRIE (206 aa)) lie on the Extracellular side of the membrane. In terms of domain architecture, Ig-like spans 30 to 123 (PQIDGQTWAE…SGRPANASVI (94 aa)). Residues cysteine 52 and cysteine 107 are joined by a disulfide bond. N-linked (GlcNAc...) asparagine glycosylation is found at asparagine 106, asparagine 162, asparagine 192, and asparagine 205. The chain crosses the membrane as a helical span at residues 233 to 253 (VPLLGIVVAGGLALGTLVGFS). Residues 254-365 (TLVACLVCRK…SSVSSDEIWL (112 aa)) lie on the Cytoplasmic side of the membrane.

In terms of assembly, interacts with GRIN2B. Expressed throughout the brain with higher levels within the hippocampus.

Its subcellular location is the late endosome. The protein localises to the lysosome. It localises to the cell membrane. It is found in the secreted. Its function is as follows. In neurons, modulates the degradation of NMDA receptor GRIN2B subunit. Plays a role in the regulation of neuronal excitability. The polypeptide is Transmembrane protein 25 (Mus musculus (Mouse)).